The primary structure comprises 310 residues: Homoserine kinase (310 aa).

ATP is bound at residue 95 to 105; sequence PQSRGLGSSAA.

This sequence belongs to the GHMP kinase family. Homoserine kinase subfamily.

It is found in the cytoplasm. The catalysed reaction is L-homoserine + ATP = O-phospho-L-homoserine + ADP + H(+). It functions in the pathway amino-acid biosynthesis; L-threonine biosynthesis; L-threonine from L-aspartate: step 4/5. Functionally, catalyzes the ATP-dependent phosphorylation of L-homoserine to L-homoserine phosphate. This is Homoserine kinase from Corynebacterium kroppenstedtii (strain DSM 44385 / JCM 11950 / CIP 105744 / CCUG 35717).